The primary structure comprises 260 residues: 3'-5' ssDNA/RNA exonuclease TatD (260 aa).

A divalent metal cation contacts are provided by Glu92, His128, and His153.

This sequence belongs to the metallo-dependent hydrolases superfamily. TatD-type hydrolase family. TatD subfamily. Monomer. Mg(2+) serves as cofactor.

It is found in the cytoplasm. Functionally, 3'-5' exonuclease that prefers single-stranded DNA and RNA. May play a role in the H(2)O(2)-induced DNA damage repair. The sequence is that of 3'-5' ssDNA/RNA exonuclease TatD from Pectobacterium atrosepticum (strain SCRI 1043 / ATCC BAA-672) (Erwinia carotovora subsp. atroseptica).